We begin with the raw amino-acid sequence, 312 residues long: Dihydroorotate dehydrogenase B (NAD(+)), catalytic subunit (312 aa).

Residues S23 and 47-48 (KA) each bind FMN. Residues K47 and 71-75 (NAIGL) contribute to the substrate site. FMN contacts are provided by N102 and N130. N130 provides a ligand contact to substrate. C133 functions as the Nucleophile in the catalytic mechanism. Residues K168 and I194 each coordinate FMN. 195 to 196 (NT) serves as a coordination point for substrate. FMN-binding positions include G220, 246–247 (GG), and 268–269 (GT).

Belongs to the dihydroorotate dehydrogenase family. Type 1 subfamily. In terms of assembly, heterotetramer of 2 PyrK and 2 PyrD type B subunits. FMN is required as a cofactor.

The protein localises to the cytoplasm. It catalyses the reaction (S)-dihydroorotate + NAD(+) = orotate + NADH + H(+). The protein operates within pyrimidine metabolism; UMP biosynthesis via de novo pathway; orotate from (S)-dihydroorotate (NAD(+) route): step 1/1. In terms of biological role, catalyzes the conversion of dihydroorotate to orotate with NAD(+) as electron acceptor. The sequence is that of Dihydroorotate dehydrogenase B (NAD(+)), catalytic subunit (pyrDB) from Enterococcus faecalis (strain ATCC 700802 / V583).